The sequence spans 215 residues: Pyrrolidone-carboxylate peptidase (215 aa).

Catalysis depends on residues Glu-80, Cys-143, and His-167.

This sequence belongs to the peptidase C15 family. In terms of assembly, homotetramer.

Its subcellular location is the cytoplasm. It catalyses the reaction Release of an N-terminal pyroglutamyl group from a polypeptide, the second amino acid generally not being Pro.. Its function is as follows. Removes 5-oxoproline from various penultimate amino acid residues except L-proline. This is Pyrrolidone-carboxylate peptidase from Yersinia pestis bv. Antiqua (strain Antiqua).